A 158-amino-acid polypeptide reads, in one-letter code: Non-secretory ribonuclease (158 aa).

Residues 1–27 (MVPKLFTSQICVLLLFGLLSVEVSLQV) form the signal peptide. C-linked (Man) tryptophan glycosylation occurs at Trp34. Residue His42 is the Proton acceptor of the active site. 4 disulfide bridges follow: Cys50–Cys110, Cys64–Cys121, Cys82–Cys136, and Cys89–Cys98. Tyr60 is modified (3'-nitrotyrosine). 65 to 69 (KNQNT) serves as a coordination point for substrate. Residues Asn86, Asn92, and Asn111 are each glycosylated (N-linked (GlcNAc...) asparagine). His153 serves as the catalytic Proton donor.

The protein belongs to the pancreatic ribonuclease family. In terms of assembly, interacts with and forms a tight 1:1 complex with RNH1. Dimerization of two such complexes may occur.

Its subcellular location is the lysosome. It localises to the cytoplasmic granule. The catalysed reaction is an [RNA] containing cytidine + H2O = an [RNA]-3'-cytidine-3'-phosphate + a 5'-hydroxy-ribonucleotide-3'-[RNA].. It catalyses the reaction an [RNA] containing uridine + H2O = an [RNA]-3'-uridine-3'-phosphate + a 5'-hydroxy-ribonucleotide-3'-[RNA].. Functionally, this is a non-secretory ribonuclease. It is a pyrimidine specific nuclease with a slight preference for U. Cytotoxin and helminthotoxin. Possesses a wide variety of biological activities. This Saguinus oedipus (Cotton-top tamarin) protein is Non-secretory ribonuclease (RNASE2).